A 285-amino-acid polypeptide reads, in one-letter code: 1,4-dihydroxy-2-naphthoyl-CoA synthase (285 aa).

Residues arginine 45, 84-89 (SGGDQK), tyrosine 97, 129-133 (YSIGG), threonine 155, serine 161, tyrosine 258, and lysine 273 each bind substrate. 154 to 156 (QTG) is a binding site for hydrogencarbonate.

The protein belongs to the enoyl-CoA hydratase/isomerase family. MenB subfamily. Homohexamer. Dimer of a homotrimer. Requires hydrogencarbonate as cofactor.

It carries out the reaction 2-succinylbenzoyl-CoA + H(+) = 1,4-dihydroxy-2-naphthoyl-CoA + H2O. Its pathway is quinol/quinone metabolism; 1,4-dihydroxy-2-naphthoate biosynthesis; 1,4-dihydroxy-2-naphthoate from chorismate: step 6/7. The protein operates within quinol/quinone metabolism; menaquinone biosynthesis. With respect to regulation, inhibited by sulfite and nitrate. Functionally, converts o-succinylbenzoyl-CoA (OSB-CoA) to 1,4-dihydroxy-2-naphthoyl-CoA (DHNA-CoA). This chain is 1,4-dihydroxy-2-naphthoyl-CoA synthase, found in Escherichia coli (strain K12).